Here is a 156-residue protein sequence, read N- to C-terminus: Small ribosomal subunit protein uS7c (156 aa).

This sequence belongs to the universal ribosomal protein uS7 family. In terms of assembly, part of the 30S ribosomal subunit.

The protein resides in the plastid. Its subcellular location is the chloroplast. One of the primary rRNA binding proteins, it binds directly to 16S rRNA where it nucleates assembly of the head domain of the 30S subunit. This Tupiella akineta (Green alga) protein is Small ribosomal subunit protein uS7c (rps7).